The following is a 486-amino-acid chain: MSLFDHKISELHTLLQKKEISVSDLVDESFRRIGEVEEQVQAFLTLNEENARAKAKELDDKLAKEGNDFGVLFGMPIGIKDNIVTKGLRTTCASKILYNFDPIYDATVMERLNEAGAITIGKLNMDEFAMGSSTENSGFQLTRNPWDLERVPGGSSGGSAAAVAAGEVPFALGSDTGGSIRQPAAFCGVVGLKPTYGRVSRFGLVAFASSLDQIGPITRTVEDNAYLLQVIAGLDPMDSTSANVEVPNYVEALTGDIKGLKIAVPKEYLGEGVAEEVRQSVLDALKVLEKLGATWEEVSLPHSKYALATYYLLASSEASANLARFDGVRYGYRTDNAKNLIDMYKQTRSEGFGNEVKRRIMLGTFALSAGYYDAYYKKAQQVRTLIKQDFEKVFEKYDVIIGPTTPTPAFKIGEKTHDPLTMYANDILTIPVNLAGVPGISVPCGFVNGLPVGLQIIGKHFDESTIYRVAHAFEQATDYHKQKPAL.

Residues Lys-80 and Ser-155 each act as charge relay system in the active site. Catalysis depends on Ser-179, which acts as the Acyl-ester intermediate.

It belongs to the amidase family. GatA subfamily. Heterotrimer of A, B and C subunits.

It carries out the reaction L-glutamyl-tRNA(Gln) + L-glutamine + ATP + H2O = L-glutaminyl-tRNA(Gln) + L-glutamate + ADP + phosphate + H(+). Allows the formation of correctly charged Gln-tRNA(Gln) through the transamidation of misacylated Glu-tRNA(Gln) in organisms which lack glutaminyl-tRNA synthetase. The reaction takes place in the presence of glutamine and ATP through an activated gamma-phospho-Glu-tRNA(Gln). The sequence is that of Glutamyl-tRNA(Gln) amidotransferase subunit A from Geobacillus sp. (strain WCH70).